Consider the following 224-residue polypeptide: Fibrillarin-like rRNA/tRNA 2'-O-methyltransferase (224 aa).

S-adenosyl-L-methionine contacts are provided by residues 82 to 83 (TT), 100 to 101 (EF), 125 to 126 (DA), and 145 to 148 (DVAQ).

The protein belongs to the methyltransferase superfamily. Fibrillarin family. In terms of assembly, interacts with nop5. Component of box C/D small ribonucleoprotein (sRNP) particles that contain rpl7ae, FlpA and nop5, plus a guide RNA.

Functionally, involved in pre-rRNA and tRNA processing. Utilizes the methyl donor S-adenosyl-L-methionine to catalyze the site-specific 2'-hydroxyl methylation of ribose moieties in rRNA and tRNA. Site specificity is provided by a guide RNA that base pairs with the substrate. Methylation occurs at a characteristic distance from the sequence involved in base pairing with the guide RNA. The sequence is that of Fibrillarin-like rRNA/tRNA 2'-O-methyltransferase from Methanothermobacter thermautotrophicus (strain ATCC 29096 / DSM 1053 / JCM 10044 / NBRC 100330 / Delta H) (Methanobacterium thermoautotrophicum).